Here is a 122-residue protein sequence, read N- to C-terminus: Large ribosomal subunit protein uL18 (122 aa).

This sequence belongs to the universal ribosomal protein uL18 family. In terms of assembly, part of the 50S ribosomal subunit; part of the 5S rRNA/L5/L18/L25 subcomplex. Contacts the 5S and 23S rRNAs.

This is one of the proteins that bind and probably mediate the attachment of the 5S RNA into the large ribosomal subunit, where it forms part of the central protuberance. The sequence is that of Large ribosomal subunit protein uL18 from Mycobacterium avium (strain 104).